Reading from the N-terminus, the 358-residue chain is Gibberellin receptor GID1B (358 aa).

Alanine 2 bears the N-acetylalanine mark. The Involved in the stabilization of the negatively charged intermediate by the formation of the oxyanion hole motif lies at 113-115 (HGG). Gibberellin A4-binding positions include 115-116 (GS), tyrosine 127, and serine 191. Gibberellin A3 is bound by residues serine 116, tyrosine 127, serine 191, and phenylalanine 238. Serine 191 is an active-site residue. Residue aspartate 289 is part of the active site. Glycine 320 serves as a coordination point for gibberellin A4. A gibberellin A3-binding site is contributed by glycine 320.

Belongs to the 'GDXG' lipolytic enzyme family. In terms of assembly, interacts with the DELLA proteins GAI, RGA, RGL1, RGL2 and RGL3 in a GA-dependent manner. As to expression, widely expressed.

It is found in the nucleus. Functions as a soluble gibberellin (GA) receptor. GA is an essential hormone that regulates growth and development in plants. Binds with high affinity the biologically active gibberellin GA4, but has no affinity for the biologically inactive GAs. In response to GA, interacts with specific DELLA proteins, known as repressors of GA-induced growth, and targets them for degradation via proteasome. Seems to be required for GA signaling that controls root growth, seed germination and flower development. May function as a dominant GA receptor at low GA concentrations in germination. Partially redundant with GID1A and GID1C. The protein is Gibberellin receptor GID1B (GID1B) of Arabidopsis thaliana (Mouse-ear cress).